The sequence spans 388 residues: Putative F-box protein At3g17490 (388 aa).

Positions 1–46 (MMMPHLSEDLVEEILSRVPAISLKRLRYTCKQWNALFNDQRFSKKH) constitute an F-box domain.

This chain is Putative F-box protein At3g17490, found in Arabidopsis thaliana (Mouse-ear cress).